The primary structure comprises 309 residues: Homoserine kinase (309 aa).

91–101 is an ATP binding site; that stretch reads PIGSGLGSSAC.

Belongs to the GHMP kinase family. Homoserine kinase subfamily.

The protein resides in the cytoplasm. The enzyme catalyses L-homoserine + ATP = O-phospho-L-homoserine + ADP + H(+). It functions in the pathway amino-acid biosynthesis; L-threonine biosynthesis; L-threonine from L-aspartate: step 4/5. Functionally, catalyzes the ATP-dependent phosphorylation of L-homoserine to L-homoserine phosphate. The chain is Homoserine kinase from Edwardsiella ictaluri (strain 93-146).